A 215-amino-acid chain; its full sequence is Osteoclast-stimulating factor 1 (215 aa).

Serine 2 carries the post-translational modification N-acetylserine. Residues 12 to 71 (GQVKVFRALYTFEPRTPDELYFEEGDIIYITDMSDTSWWKGTCKGRTGLIPSNYVAEQAE) enclose the SH3 domain. ANK repeat units lie at residues 72–101 (SIDN…GVNG), 105–135 (AGST…ELNQ), and 139–168 (LGDT…RTDL). Positions 192-215 (KQQGTDGARTLSNAEDYLDDEDSD) are disordered. Threonine 201 carries the phosphothreonine modification. Residues serine 203 and serine 214 each carry the phosphoserine modification.

In terms of assembly, interacts with C-SRC and SMN1. Interacts with FASLG.

Its subcellular location is the cytoplasm. Its function is as follows. Induces bone resorption, acting probably through a signaling cascade which results in the secretion of factor(s) enhancing osteoclast formation and activity. The sequence is that of Osteoclast-stimulating factor 1 (Ostf1) from Mus musculus (Mouse).